A 353-amino-acid polypeptide reads, in one-letter code: Guanine nucleotide-binding protein subunit alpha (353 aa).

The tract at residues Met1–Asp26 is disordered. Gly2 carries N-myristoyl glycine lipidation. Residue Cys3 is the site of S-palmitoyl cysteine attachment. Residues Val7–Asp26 are compositionally biased toward basic and acidic residues. The 322-residue stretch at Asn32–Ile353 folds into the G-alpha domain. The G1 motif stretch occupies residues Lys35 to Thr48. The GTP site is built by Glu43, Ser44, Gly45, Lys46, Ser47, Thr48, Asp150, Leu175, Thr181, Gly203, Asn269, Lys270, Asp272, and Ala325. Ser47 serves as a coordination point for Mg(2+). The G2 motif stretch occupies residues Asp173–Thr181. Position 181 (Thr181) interacts with Mg(2+). The segment at Tyr196–Arg205 is G3 motif. The segment at Ile265–Asp272 is G4 motif. Positions Thr323–Thr328 are G5 motif.

Belongs to the G-alpha family. G(q) subfamily. As to quaternary structure, g proteins are composed of 3 units; alpha, beta and gamma. The alpha chain contains the guanine nucleotide binding site. The cofactor is Mg(2+).

Guanine nucleotide-binding proteins (G proteins) are involved as modulators or transducers in various transmembrane signaling systems. This Sporothrix schenckii (strain ATCC 58251 / de Perez 2211183) (Rose-picker's disease fungus) protein is Guanine nucleotide-binding protein subunit alpha (SSG-1).